A 115-amino-acid polypeptide reads, in one-letter code: U31-theraphotoxin-Cg1b (115 aa).

An N-terminal signal peptide occupies residues Met-1–Gly-18. Positions Arg-19 to Glu-51 are excised as a propeptide. Disulfide bonds link Cys-52-Cys-67, Cys-60-Cys-73, Cys-64-Cys-113, and Cys-66-Cys-86.

It belongs to the neurotoxin 03 (Tx2) family. 02 subfamily. In terms of tissue distribution, expressed by the venom gland.

It localises to the secreted. Functionally, probable ion channel inhibitor. The polypeptide is U31-theraphotoxin-Cg1b (Chilobrachys guangxiensis (Chinese earth tiger tarantula)).